The primary structure comprises 333 residues: Protoheme IX farnesyltransferase (333 aa).

The next 8 membrane-spanning stretches (helical) occupy residues 36 to 56 (LIPL…GWPL), 61 to 81 (LVCT…LNCL), 107 to 127 (AAFA…VSGV), 130 to 150 (LAAG…TALL), 158 to 178 (IVIG…AATG), 186 to 206 (WLFA…ALLL), 243 to 263 (FLGV…LLPF), and 284 to 304 (AKGL…LLVF).

It belongs to the UbiA prenyltransferase family. Protoheme IX farnesyltransferase subfamily.

It is found in the cell inner membrane. The enzyme catalyses heme b + (2E,6E)-farnesyl diphosphate + H2O = Fe(II)-heme o + diphosphate. It functions in the pathway porphyrin-containing compound metabolism; heme O biosynthesis; heme O from protoheme: step 1/1. In terms of biological role, converts heme B (protoheme IX) to heme O by substitution of the vinyl group on carbon 2 of heme B porphyrin ring with a hydroxyethyl farnesyl side group. The protein is Protoheme IX farnesyltransferase of Synechococcus sp. (strain WH7803).